Consider the following 388-residue polypeptide: Quinolone resistance protein NorA (388 aa).

The next 12 membrane-spanning stretches (helical) occupy residues 5–25 (IFVL…VIPV), 42–62 (LLVA…GTLA), 69–89 (LIIC…AVGH), 99–119 (VIGG…IADI), 129–149 (FGYM…IGGF), 157–177 (MPFY…IVLI), 201–221 (WKVF…LSAF), 239–259 (DISI…IYFF), 269–289 (LTFI…LVFA), 293–313 (WSIM…RPAI), 331–351 (LNST…GALF), and 355–375 (IEAP…IVLI).

It belongs to the major facilitator superfamily. TCR/Tet family.

The protein resides in the cell membrane. Its function is as follows. Involved in quinolone resistance. May constitute a membrane-associated active efflux pump of hydrophilic quinolones. This chain is Quinolone resistance protein NorA (norA), found in Staphylococcus aureus (strain MSSA476).